A 333-amino-acid chain; its full sequence is tRNA-dihydrouridine(16) synthase (333 aa).

Residues P19 to Q21 and Q80 each bind FMN. C110 (proton donor) is an active-site residue. Residues K151, N211–D213, and G235–R236 contribute to the FMN site.

This sequence belongs to the Dus family. DusC subfamily. It depends on FMN as a cofactor.

The catalysed reaction is 5,6-dihydrouridine(16) in tRNA + NADP(+) = uridine(16) in tRNA + NADPH + H(+). The enzyme catalyses 5,6-dihydrouridine(16) in tRNA + NAD(+) = uridine(16) in tRNA + NADH + H(+). In terms of biological role, catalyzes the synthesis of 5,6-dihydrouridine (D), a modified base found in the D-loop of most tRNAs, via the reduction of the C5-C6 double bond in target uridines. Specifically modifies U16 in tRNAs. The sequence is that of tRNA-dihydrouridine(16) synthase from Neisseria meningitidis serogroup A / serotype 4A (strain DSM 15465 / Z2491).